The chain runs to 466 residues: Phytase A (466 aa).

The N-terminal stretch at M1–G19 is a signal peptide. N27 is a glycosylation site (N-linked (GlcNAc...) asparagine). C31 and C40 form a disulfide bridge. The 1D-myo-inositol hexakisphosphate site is built by Y51, R81, H82, R85, and T88. Intrachain disulfides connect C71/C414, C215/C465, C264/C282, and C436/C444. H82 (nucleophile) is an active-site residue. N-linked (GlcNAc...) asparagine glycans are attached at residues N105 and N120. R165 is a binding site for 1D-myo-inositol hexakisphosphate. N-linked (GlcNAc...) asparagine glycans are attached at residues N207 and N230. K301 is a binding site for 1D-myo-inositol hexakisphosphate. N-linked (GlcNAc...) asparagine glycosylation is found at N339 and N352. 1D-myo-inositol hexakisphosphate-binding residues include H361 and D362. N376 is a glycosylation site (N-linked (GlcNAc...) asparagine).

The protein belongs to the histidine acid phosphatase family. As to quaternary structure, monomer.

It localises to the secreted. The enzyme catalyses 1D-myo-inositol hexakisphosphate + H2O = 1D-myo-inositol 1,2,4,5,6-pentakisphosphate + phosphate. It carries out the reaction 1D-myo-inositol 1,2,4,5,6-pentakisphosphate + H2O = 1D-myo-inositol 1,2,5,6-tetrakisphosphate + phosphate. The catalysed reaction is 1D-myo-inositol 1,2,5,6-tetrakisphosphate + H2O = 1D-myo-inositol 1,2,6-trisphosphate + phosphate. It catalyses the reaction 1D-myo-inositol 1,2,6-trisphosphate + H2O = 1D-myo-inositol 1,2-bisphosphate + phosphate. The enzyme catalyses 1D-myo-inositol 1,2-bisphosphate + H2O = 1D-myo-inositol 2-phosphate + phosphate. Its function is as follows. Catalyzes the phosphate monoester hydrolysis of phytic acid (myo-inositol hexakisphosphate), which results in the stepwise formation of myo-inositol pentakis-, tetrakis-, tris-, bis-, and monophosphates, as well as the liberation of inorganic phosphate. Myo-inositol 2-monophosphate is the end product. Has a broad substrate specificity and is also able to dephosphorylate other classic acid phosphatase substrates such as p-nitrophenyl phosphate, phenyl phosphate, fructose 1,6-bisphosphate, glucose 6-phosphate, 3-phosphoglycerate, as well as ADP and ATP. This is Phytase A from Aspergillus terreus.